The chain runs to 436 residues: UDP-N-acetylmuramate--L-alanine ligase (436 aa).

An ATP-binding site is contributed by 108 to 114; sequence GAHGKTS.

It belongs to the MurCDEF family.

The protein resides in the cytoplasm. The enzyme catalyses UDP-N-acetyl-alpha-D-muramate + L-alanine + ATP = UDP-N-acetyl-alpha-D-muramoyl-L-alanine + ADP + phosphate + H(+). Its pathway is cell wall biogenesis; peptidoglycan biosynthesis. In terms of biological role, cell wall formation. In Bacillus cereus (strain B4264), this protein is UDP-N-acetylmuramate--L-alanine ligase.